The following is a 775-amino-acid chain: Kazrin (775 aa).

The tract at residues 38 to 66 is disordered; the sequence is AELSGGGGPGPGPGAAASASAAGDSAATN. Over residues 51–64 the composition is skewed to low complexity; the sequence is GAAASASAAGDSAA. The stretch at 74–256 forms a coiled coil; sequence AQVLLREEVS…LATLTKDVPK (183 aa). The interval 174–333 is interaction with PPL; sequence RDFIRNYEQH…SAAEGDRSST (160 aa). The interval 290-427 is disordered; the sequence is QQTLYHSHPP…QSLSLSEGEE (138 aa). Residues Ser352, Ser367, and Ser387 each carry the phosphoserine modification. Polar residues predominate over residues 411–422; the sequence is SQCSPTRQSLSL. 3 consecutive SAM domains span residues 446–511, 524–588, and 612–679; these read WKAG…YRDA, DHHW…LYQV, and WTNQ…SAVF. Disordered regions lie at residues 688–715 and 729–762; these read REAERFGTPPGRASSVTRAGKEENSSGL and RGFSSKDPDFHDDYGSLQNEDCGDDDPQSRLEQC. The segment covering 732-742 has biased composition (basic and acidic residues); it reads SSKDPDFHDDY.

This sequence belongs to the kazrin family. As to quaternary structure, isoform 2, isoform 3 and isoform 4 interact with PPL N-terminus. Isoform 2, isoform 3 and isoform 4 are expressed in several cell lines including keratinocytes and bladder and epidermoid carcinoma (at protein level). Isoform 2, isoform 3 and isoform 4 are expressed in hair follicle and interfollicular epidermis (at protein level).

It is found in the cytoplasm. Its subcellular location is the cytoskeleton. The protein localises to the cell junction. It localises to the desmosome. The protein resides in the nucleus. Component of the cornified envelope of keratinocytes. May be involved in the interplay between adherens junctions and desmosomes. The function in the nucleus is not known. The chain is Kazrin from Homo sapiens (Human).